Reading from the N-terminus, the 469-residue chain is Alpha,alpha-trehalose-phosphate synthase [UDP-forming] (469 aa).

Tyrosine 87 and aspartate 141 together coordinate D-glucose 6-phosphate. UDP is bound by residues arginine 279 and lysine 284. UDP-alpha-D-glucose-binding residues include arginine 279 and lysine 284. A D-glucose 6-phosphate-binding site is contributed by arginine 317. 378 to 386 (DGMNLVSYE) provides a ligand contact to UDP-alpha-D-glucose. 382–386 (LVSYE) contributes to the UDP binding site.

Belongs to the glycosyltransferase 20 family.

The catalysed reaction is D-glucose 6-phosphate + UDP-alpha-D-glucose = alpha,alpha-trehalose 6-phosphate + UDP + H(+). Its pathway is carbohydrate biosynthesis. In terms of biological role, synthase catalytic subunit of the trehalose synthase complex that catalyzes the production of trehalose from glucose-6-phosphate and UDP-alpha-D-glucose in a two step process. The disaccharide trehalose serves as a storage carbohydrate that is mobilized during spore germination. This Yarrowia lipolytica (strain CLIB 122 / E 150) (Yeast) protein is Alpha,alpha-trehalose-phosphate synthase [UDP-forming].